A 358-amino-acid polypeptide reads, in one-letter code: UDP-N-acetylglucosamine--N-acetylmuramyl-(pentapeptide) pyrophosphoryl-undecaprenol N-acetylglucosamine transferase (358 aa).

UDP-N-acetyl-alpha-D-glucosamine-binding positions include 11–13, N125, R162, S196, and Q288; that span reads TAG.

This sequence belongs to the glycosyltransferase 28 family. MurG subfamily.

Its subcellular location is the cell membrane. The enzyme catalyses di-trans,octa-cis-undecaprenyl diphospho-N-acetyl-alpha-D-muramoyl-L-alanyl-D-glutamyl-meso-2,6-diaminopimeloyl-D-alanyl-D-alanine + UDP-N-acetyl-alpha-D-glucosamine = di-trans,octa-cis-undecaprenyl diphospho-[N-acetyl-alpha-D-glucosaminyl-(1-&gt;4)]-N-acetyl-alpha-D-muramoyl-L-alanyl-D-glutamyl-meso-2,6-diaminopimeloyl-D-alanyl-D-alanine + UDP + H(+). It participates in cell wall biogenesis; peptidoglycan biosynthesis. Its function is as follows. Cell wall formation. Catalyzes the transfer of a GlcNAc subunit on undecaprenyl-pyrophosphoryl-MurNAc-pentapeptide (lipid intermediate I) to form undecaprenyl-pyrophosphoryl-MurNAc-(pentapeptide)GlcNAc (lipid intermediate II). This chain is UDP-N-acetylglucosamine--N-acetylmuramyl-(pentapeptide) pyrophosphoryl-undecaprenol N-acetylglucosamine transferase, found in Leifsonia xyli subsp. xyli (strain CTCB07).